The primary structure comprises 379 residues: Protein PatA (379 aa).

A disordered region spans residues 181–226 (RREASSQEISSSTEHNQIPVNNRRSTKFTSPPHTQPKPEPRLPQIN). Over residues 186 to 212 (SQEISSSTEHNQIPVNNRRSTKFTSPP) the composition is skewed to polar residues. The 117-residue stretch at 262–378 (TIFCIDENPI…DLLKVIFKHI (117 aa)) folds into the Response regulatory domain. Asp-313 is modified (4-aspartylphosphate).

Its subcellular location is the cell septum. Functionally, controls heterocyst pattern formation. Required for the differentiation of intercalary heterocysts but not for terminal heterocysts. The sequence is that of Protein PatA (patA) from Nostoc sp. (strain PCC 7120 / SAG 25.82 / UTEX 2576).